Reading from the N-terminus, the 358-residue chain is Malate dehydrogenase 2, glyoxysomal (358 aa).

A glyoxysome-targeting transit peptide spans 1 to 38; it reads MEFRGDANKRIAMISAHLQPSFTPQMEAKNSVMGRENC. NAD(+)-binding positions include 53–59 and aspartate 79; that span reads GAAGGIG. Arginine 126 and arginine 132 together coordinate substrate. Residues asparagine 139 and 162–164 contribute to the NAD(+) site; that span reads ISN. The substrate site is built by asparagine 164 and arginine 198. The Proton acceptor role is filled by histidine 222. Methionine 273 is an NAD(+) binding site.

It belongs to the LDH/MDH superfamily. MDH type 1 family. As to quaternary structure, homodimer.

Its subcellular location is the glyoxysome. The catalysed reaction is (S)-malate + NAD(+) = oxaloacetate + NADH + H(+). This chain is Malate dehydrogenase 2, glyoxysomal (MDH2), found in Brassica napus (Rape).